The chain runs to 217 residues: ATP-dependent Clp protease proteolytic subunit 2 (217 aa).

Catalysis depends on Ser121, which acts as the Nucleophile. The active site involves His146.

It belongs to the peptidase S14 family. Fourteen ClpP subunits assemble into 2 heptameric rings which stack back to back to give a disk-like structure with a central cavity, resembling the structure of eukaryotic proteasomes.

The protein resides in the cytoplasm. The enzyme catalyses Hydrolysis of proteins to small peptides in the presence of ATP and magnesium. alpha-casein is the usual test substrate. In the absence of ATP, only oligopeptides shorter than five residues are hydrolyzed (such as succinyl-Leu-Tyr-|-NHMec, and Leu-Tyr-Leu-|-Tyr-Trp, in which cleavage of the -Tyr-|-Leu- and -Tyr-|-Trp bonds also occurs).. In terms of biological role, cleaves peptides in various proteins in a process that requires ATP hydrolysis. Has a chymotrypsin-like activity. Plays a major role in the degradation of misfolded proteins. The protein is ATP-dependent Clp protease proteolytic subunit 2 of Paraburkholderia xenovorans (strain LB400).